Consider the following 590-residue polypeptide: MSAILSADDLNDFISPGLACIKPVENFPQKNTASEENAYEVTTEDKIQPENQAPTQISLTDCLACSGCVTSAEAVLISLQSHAEVLNTLDAHRPAPLIITQDGNLSVSRKIEPDERIFVASVSPQVRASLAATYDISERKAGHMIDQLLRGPQGLRNGGKHGNGFTWVLDTNVLRQMVLTLAAQEVTEALHTSSASSGSGKYTSPKKPILSSACPGWICYAEKTHPHVLPHLSRLKSPQALSGTFVKSILSRTLGIAPSQIWHLAVMPCFDKKLEASREELTDAAWSNISDSPVRDVDCVITSRELLMLASSRNISLPSLPLKSLAPTYAPHFPDPTVDSFLFSHTQTSKQSSKYGTSGGYLYYILLLHKEKHPGSRIEVQRGRNSDVIEYSLMSETNEAIMKAARYYGFRNIQNLVRKMKPARASRLPGANRRGAAGSGASSSGLDYAFVEVMACPGGCTNGGGQIRLDDAREANASLHSATPNDSAVTTQKHTTYEQRQWLSRVDEAYFSAESDSEDEAKPAATGSSLHDMEIRTRDILQYWTNLTGAQLEDLVYTTFRKVESDVGKDKNVNDTTRVAELAGKIGGGW.

[4Fe-4S] cluster contacts are provided by Cys20, Cys62, Cys65, Cys68, Cys214, Cys269, Cys456, and Cys460.

The protein belongs to the NARF family.

Its function is as follows. Component of the cytosolic Fe/S protein assembly machinery. Required for maturation of extramitochondrial Fe/S proteins. May play a role in the transfer of pre-assembled Fe/S clusters to target apoproteins. The polypeptide is Cytosolic Fe-S cluster assembly factor nar1 (nar1) (Talaromyces marneffei (strain ATCC 18224 / CBS 334.59 / QM 7333) (Penicillium marneffei)).